The sequence spans 511 residues: MLVDGPSEWPALRFLLLAVAMSFFGSALSIDETRAHLLLKEKMMRLGGRLVLNTKEEQANERLMMLKIAEMKEAMRTLIFPPSMHFFQAKHLIERSQVFNILRMMPKGAALHLHDIGIVTMDWLVRNVTYRPHCHICFTPKGIMQFRFAHPTPRTSEKCSKWILLEDYRKRVQNVTEFDDSLLRNFTLVTQHPEVIYTNQNVVWSKFETIFFTISGLIHYAPVFRDYVFQSMQEFYEDNVLYMEIRARLLPVYELSGEHHDEEWSVKTYQEVAQKFVETHPEFIGIKIIYSDHRSKDVAVIAESIRTAMGLRTKFPTVVAGFDLVGREDTGHSLQDYKEALMIPAKGGVKLPYFFHAGETDWQGTSIDRNILDALMLNTTRIGHGFALSKHPAVRAYSWKKDIPIEVCPISNQVLKLVSDLRNHPVATLMATGHPMVISSDDPAIFGAKGLSYDFYEVFMGIGGMKADLRTLKQLAMNSIKYSALLEIEKNTFMEIWKKRWDKFIADVATK.

The signal sequence occupies residues 1–29 (MLVDGPSEWPALRFLLLAVAMSFFGSALS). Residues 30–100 (IDETRAHLLL…HLIERSQVFN (71 aa)) form a dimerization region. Zn(2+) contacts are provided by H112 and H114. A substrate-binding site is contributed by D115. An N-linked (GlcNAc...) asparagine glycan is attached at N127. Residues 127–185 (NVTYRPHCHICFTPKGIMQFRFAHPTPRTSEKCSKWILLEDYRKRVQNVTEFDDSLLRN) form a PRB domain region. Cysteines 137 and 159 form a disulfide. N174 and N185 each carry an N-linked (GlcNAc...) asparagine glycan. Residues 204–211 (WSKFETIF), H293, and G326 each bind substrate. H356 serves as a coordination point for Zn(2+). The Proton donor role is filled by E359. N378 carries an N-linked (GlcNAc...) asparagine glycan. Catalysis depends on H384, which acts as the Proton acceptor. Zn(2+) is bound at residue D441. D442 serves as a coordination point for substrate.

The protein belongs to the metallo-dependent hydrolases superfamily. Adenosine and AMP deaminases family. ADGF subfamily. In terms of assembly, homodimer. Interacts with adenosine receptors. Binds heparin. It depends on Zn(2+) as a cofactor.

The protein localises to the secreted. It carries out the reaction adenosine + H2O + H(+) = inosine + NH4(+). Functionally, adenosine deaminase that may contribute to the degradation of extracellular adenosine, a signaling molecule that controls a variety of cellular responses. Requires elevated adenosine levels for optimal enzyme activity. Binds to cell surfaces via proteoglycans and may play a role in the regulation of cell proliferation and differentiation, independently of its enzyme activity. This is Adenosine deaminase 2 from Pongo abelii (Sumatran orangutan).